The sequence spans 203 residues: FMN-dependent NADH:quinone oxidoreductase (203 aa).

FMN contacts are provided by residues Ser-9 and 15–17 (SKS).

It belongs to the azoreductase type 1 family. Homodimer. FMN serves as cofactor.

It catalyses the reaction 2 a quinone + NADH + H(+) = 2 a 1,4-benzosemiquinone + NAD(+). The catalysed reaction is N,N-dimethyl-1,4-phenylenediamine + anthranilate + 2 NAD(+) = 2-(4-dimethylaminophenyl)diazenylbenzoate + 2 NADH + 2 H(+). In terms of biological role, quinone reductase that provides resistance to thiol-specific stress caused by electrophilic quinones. Also exhibits azoreductase activity. Catalyzes the reductive cleavage of the azo bond in aromatic azo compounds to the corresponding amines. This Bordetella avium (strain 197N) protein is FMN-dependent NADH:quinone oxidoreductase.